Consider the following 439-residue polypeptide: Large ribosomal subunit protein mL65 (439 aa).

This sequence belongs to the mitochondrion-specific ribosomal protein mL65 family. Component of the mitochondrial large ribosomal subunit (mt-LSU). Mature mammalian 55S mitochondrial ribosomes consist of a small (28S) and a large (39S) subunit. The 28S small subunit contains a 12S ribosomal RNA (12S mt-rRNA) and 30 different proteins. The 39S large subunit contains a 16S rRNA (16S mt-rRNA), a copy of mitochondrial valine transfer RNA (mt-tRNA(Val)), which plays an integral structural role, and 52 different proteins. mL65 forms a heterodimer with mL37. As to expression, heart, skeletal muscle, kidney and liver. Lower expression in placenta and peripheral blood leukocytes.

It localises to the mitochondrion. In Homo sapiens (Human), this protein is Large ribosomal subunit protein mL65 (MRPS30).